We begin with the raw amino-acid sequence, 129 residues long: MTKADIIEGVYEKVGFSKKESAEIVELVFDTLKETLERGDKIKISGFGNFQVRQKKARVGRNPQTGKEIEISARRVLTFRPSQVLKSALNGEAPPEDHAEIDAREEAAADAAEARGEDFDEEGMEDMEG.

The interval 87 to 129 is disordered; that stretch reads SALNGEAPPEDHAEIDAREEAAADAAEARGEDFDEEGMEDMEG. Residues 95 to 117 show a composition bias toward basic and acidic residues; it reads PEDHAEIDAREEAAADAAEARGE. Residues 118–129 are compositionally biased toward acidic residues; sequence DFDEEGMEDMEG.

The protein belongs to the bacterial histone-like protein family. As to quaternary structure, heterodimer of an alpha and a beta chain.

Its function is as follows. This protein is one of the two subunits of integration host factor, a specific DNA-binding protein that functions in genetic recombination as well as in transcriptional and translational control. It is necessary for normal cell growth and the production of carotenoids in response to light. The chain is Integration host factor subunit alpha (ihfA) from Myxococcus xanthus.